The following is a 322-amino-acid chain: Protein-L-isoaspartate O-methyltransferase (322 aa).

Residues 1–101 are disordered; sequence MSGERAKRFP…AKQGDRSAAP (101 aa). Residues 14–29 are compositionally biased toward basic and acidic residues; the sequence is EDLKREPRKPEGRVAE. Low complexity-rich tracts occupy residues 33 to 51 and 67 to 91; these read AGDA…PAAA and AANP…PQGG. The active site involves Ser170.

The protein belongs to the methyltransferase superfamily. L-isoaspartyl/D-aspartyl protein methyltransferase family.

It localises to the cytoplasm. It catalyses the reaction [protein]-L-isoaspartate + S-adenosyl-L-methionine = [protein]-L-isoaspartate alpha-methyl ester + S-adenosyl-L-homocysteine. Catalyzes the methyl esterification of L-isoaspartyl residues in peptides and proteins that result from spontaneous decomposition of normal L-aspartyl and L-asparaginyl residues. It plays a role in the repair and/or degradation of damaged proteins. The chain is Protein-L-isoaspartate O-methyltransferase from Burkholderia pseudomallei (strain 668).